Consider the following 952-residue polypeptide: G patch domain-containing protein 1 homolog (952 aa).

6 disordered regions span residues 104 to 127 (QGIR…QRRR), 165 to 233 (GWKP…DDYE), 320 to 345 (DKKP…EDNS), 370 to 432 (RSRF…KDHS), 660 to 711 (PEKV…RNKP), and 822 to 952 (VAPE…KSKH). The span at 107–123 (RTRDEFANEDEQKQRSD) shows a compositional bias: basic and acidic residues. In terms of domain architecture, G-patch spans 153-199 (RDKVAVRILKSMGWKPGQGVGPRQTRKEKRQATARNSKEQYLMEHYG). Residues 214–233 (DSNNEDEDDEDITFAPDDYE) are compositionally biased toward acidic residues. Residues 323–333 (PKQKKQQHVQQ) are compositionally biased toward basic residues. 3 stretches are compositionally biased toward basic and acidic residues: residues 375–402 (PMDK…DLNP), 414–432 (QEEK…KDHS), and 679–691 (IQDK…EPSK). Low complexity predominate over residues 886 to 896 (ASSSNESSSSD). Basic residues-rich tracts occupy residues 906–934 (KLSK…KKSK) and 941–952 (HKAKKKKKKSKH).

The protein belongs to the GPATCH1 family.

In Drosophila melanogaster (Fruit fly), this protein is G patch domain-containing protein 1 homolog.